The chain runs to 305 residues: Small ribosomal subunit biogenesis GTPase RsgA (305 aa).

Residues 67-224 enclose the CP-type G domain; that stretch reads SSELVRPAVA…VADTPGFSSF (158 aa). Residues 116–119 and 166–174 each bind GTP; these read NKID and GQSGVGKST. 4 residues coordinate Zn(2+): Cys248, Cys253, His255, and Cys261.

The protein belongs to the TRAFAC class YlqF/YawG GTPase family. RsgA subfamily. Monomer. Associates with 30S ribosomal subunit, binds 16S rRNA. It depends on Zn(2+) as a cofactor.

It is found in the cytoplasm. In terms of biological role, one of several proteins that assist in the late maturation steps of the functional core of the 30S ribosomal subunit. Helps release RbfA from mature subunits. May play a role in the assembly of ribosomal proteins into the subunit. Circularly permuted GTPase that catalyzes slow GTP hydrolysis, GTPase activity is stimulated by the 30S ribosomal subunit. In Ruminiclostridium cellulolyticum (strain ATCC 35319 / DSM 5812 / JCM 6584 / H10) (Clostridium cellulolyticum), this protein is Small ribosomal subunit biogenesis GTPase RsgA.